Reading from the N-terminus, the 241-residue chain is Sec-independent protein translocase protein TatC (241 aa).

6 consecutive transmembrane segments (helical) span residues 27–47 (LIIV…FSAG), 76–96 (LTMC…YEAF), 122–142 (FVAG…SIVI), 161–181 (IVTN…IIVL), 193–213 (LVKG…FFSP), and 217–237 (LFSQ…SMVL).

Belongs to the TatC family. Forms a complex with TatA.

It localises to the cell membrane. Part of the twin-arginine translocation (Tat) system that transports large folded proteins containing a characteristic twin-arginine motif in their signal peptide across membranes. The protein is Sec-independent protein translocase protein TatC of Methanocella arvoryzae (strain DSM 22066 / NBRC 105507 / MRE50).